We begin with the raw amino-acid sequence, 343 residues long: tRNA N6-adenosine threonylcarbamoyltransferase (343 aa).

Residues H111 and H115 each coordinate Fe cation. Substrate is bound by residues 133–137 (AVSGG), D166, G179, D183, and N273. Position 301 (D301) interacts with Fe cation.

This sequence belongs to the KAE1 / TsaD family. The cofactor is Fe(2+).

It localises to the cytoplasm. The enzyme catalyses L-threonylcarbamoyladenylate + adenosine(37) in tRNA = N(6)-L-threonylcarbamoyladenosine(37) in tRNA + AMP + H(+). In terms of biological role, required for the formation of a threonylcarbamoyl group on adenosine at position 37 (t(6)A37) in tRNAs that read codons beginning with adenine. Is involved in the transfer of the threonylcarbamoyl moiety of threonylcarbamoyl-AMP (TC-AMP) to the N6 group of A37, together with TsaE and TsaB. TsaD likely plays a direct catalytic role in this reaction. The protein is tRNA N6-adenosine threonylcarbamoyltransferase of Geotalea uraniireducens (strain Rf4) (Geobacter uraniireducens).